Reading from the N-terminus, the 382-residue chain is MRPGTALQAVLLAVLLVGLRAATGRLLSASDLDLRGGQPVCRGGTQRPCYKVIYFHDTSRRLNFEEAKEACRRDGGQLVSIESEDEQKLIEKFIENLLPSDGDFWIGLRRREEKQSNSTACQDLYAWTDGSISQFRNWYVDEPSCGSEVCVVMYHQPSAPAGIGGPYMFQWNDDRCNMKNNFICKYSDEKPAVPSREAEGEETELTTPVLPEETQEEDAKKTFKESREAALNLAYILIPSIPLLLLLVVTTVVCWVWICRKRKREQPDPSTKKQHTIWPSPHQGNSPDLEVYNVIRKQSEADLAETRPDLKNISFRVCSGEATPDDMSCDYDNMAVNPSESGFVTLVSVESGFVTNDIYEFSPDQMGRSKESGWVENEIYGY.

Residues 1–21 (MRPGTALQAVLLAVLLVGLRA) form the signal peptide. Topologically, residues 22 to 235 (ATGRLLSASD…SREAALNLAY (214 aa)) are extracellular. One can recognise a C-type lectin domain in the interval 45–185 (TQRPCYKVIY…CNMKNNFICK (141 aa)). Intrachain disulfides connect Cys71–Cys184 and Cys150–Cys176. An N-linked (GlcNAc...) asparagine glycan is attached at Asn117. The chain crosses the membrane as a helical span at residues 236–256 (ILIPSIPLLLLLVVTTVVCWV). Topologically, residues 257–382 (WICRKRKREQ…GWVENEIYGY (126 aa)) are cytoplasmic. Residues 266-285 (QPDPSTKKQHTIWPSPHQGN) form a disordered region. Ser286 and Ser299 each carry phosphoserine. The segment at 330–374 (DYDNMAVNPSESGFVTLVSVESGFVTNDIYEFSPDQMGRSKESGW) is interaction with NF2. The segment at 337-382 (NPSESGFVTLVSVESGFVTNDIYEFSPDQMGRSKESGWVENEIYGY) is interaction with TLN1. 5 repeat units span residues 340-344 (ESGFV), 350-354 (ESGFV), 356-359 (NDIY), 371-375 (ESGWV), and 377-380 (NEIY). The segment at 340-375 (ESGFVTLVSVESGFVTNDIYEFSPDQMGRSKESGWV) is 3 X 5 AA repeats of E-S-G-X-V. Positions 356–380 (NDIYEFSPDQMGRSKESGWVENEIY) are 2 X 4 AA repeats of N-X-I-Y.

In terms of assembly, interacts with NF2, RDX and TLN1.

Its subcellular location is the membrane. Receptor for hyaluronate. The polypeptide is Layilin (LAYN) (Homo sapiens (Human)).